Here is an 85-residue protein sequence, read N- to C-terminus: Small ribosomal subunit protein bS16 (85 aa).

This sequence belongs to the bacterial ribosomal protein bS16 family.

The protein is Small ribosomal subunit protein bS16 of Pelobacter propionicus (strain DSM 2379 / NBRC 103807 / OttBd1).